Reading from the N-terminus, the 588-residue chain is Secreted triacylglycerol lipase LIP1 (588 aa).

Positions 1–20 (MRFSGFVSGLGLGLLTAVSA) are cleaved as a signal peptide. The active-site Acyl-ester intermediate is the S258. N-linked (GlcNAc...) asparagine glycosylation occurs at N400.

The protein belongs to the type-B carboxylesterase/lipase family.

It localises to the secreted. It catalyses the reaction a triacylglycerol + H2O = a diacylglycerol + a fatty acid + H(+). Its function is as follows. Secreted acylglycerol lipase required for efficient utilization of saturated triglyceride lipids. Is not involved in virulence. In Gibberella zeae (strain ATCC MYA-4620 / CBS 123657 / FGSC 9075 / NRRL 31084 / PH-1) (Wheat head blight fungus), this protein is Secreted triacylglycerol lipase LIP1.